Reading from the N-terminus, the 286-residue chain is Urease accessory protein UreD 2 (286 aa).

It belongs to the UreD family. In terms of assembly, ureD, UreF and UreG form a complex that acts as a GTP-hydrolysis-dependent molecular chaperone, activating the urease apoprotein by helping to assemble the nickel containing metallocenter of UreC. The UreE protein probably delivers the nickel.

It is found in the cytoplasm. Its function is as follows. Required for maturation of urease via the functional incorporation of the urease nickel metallocenter. The polypeptide is Urease accessory protein UreD 2 (Bradyrhizobium sp. (strain BTAi1 / ATCC BAA-1182)).